Here is a 220-residue protein sequence, read N- to C-terminus: Putative cobalt transport protein CbiM (220 aa).

6 helical membrane-spanning segments follow: residues 6-26 (GFLP…VISY), 45-65 (IAVA…SVTG), 74-94 (GIAV…IVLL), 107-127 (TLGA…WVVF), 153-173 (LVTS…AGVV), and 188-208 (IPIG…IAMS).

It belongs to the CbiM family. In terms of assembly, forms an energy-coupling factor (ECF) transporter complex composed of an ATP-binding protein (A component, CbiO), a transmembrane protein (T component, CbiQ) and 2 possible substrate-capture proteins (S components, CbiM and CbiN) of unknown stoichimetry.

It is found in the cell membrane. Its pathway is cofactor biosynthesis; adenosylcobalamin biosynthesis. Functionally, part of the energy-coupling factor (ECF) transporter complex CbiMNOQ involved in cobalt import. The polypeptide is Putative cobalt transport protein CbiM (Halobacterium salinarum (strain ATCC 29341 / DSM 671 / R1)).